The following is a 218-amino-acid chain: Mitochondrial fission factor (218 aa).

Topologically, residues 1-198 are cytoplasmic; it reads MAEISRIQYE…ENKERAKREM (198 aa). Threonine 89 carries the phosphothreonine modification. A phosphoserine mark is found at serine 129, serine 131, serine 146, and serine 171. A coiled-coil region spans residues 167–198; that stretch reads VDAASLRRQIIKLNRRLQLLEEENKERAKREM. The chain crosses the membrane as a helical; Anchor for type IV membrane protein span at residues 199-216; that stretch reads VMYSITVAFWLLNSWLWF. Over 217–218 the chain is Mitochondrial intermembrane; it reads RR.

The protein belongs to the Tango11 family. In terms of assembly, homodimer. Interacts with DNM1L. Interacts with C11orf65/MFI; the interaction inhibits MFF interaction with DNM1L.

It is found in the mitochondrion outer membrane. The protein localises to the peroxisome. The protein resides in the cytoplasmic vesicle. Its subcellular location is the secretory vesicle. It localises to the synaptic vesicle. Its function is as follows. Plays a role in mitochondrial and peroxisomal fission. Promotes the recruitment and association of the fission mediator dynamin-related protein 1 (DNM1L) to the mitochondrial surface. May be involved in regulation of synaptic vesicle membrane dynamics by recruitment of DNM1L to clathrin-containing vesicles. This chain is Mitochondrial fission factor (MFF), found in Pongo abelii (Sumatran orangutan).